The chain runs to 716 residues: ATP-dependent DNA helicase DinG (716 aa).

The Helicase ATP-binding domain maps to 17–294; that stretch reads ALQEQIPDFI…TCMEQFRPKT (278 aa). 54-61 is a binding site for ATP; sequence APTGVGKT. Residue Cys-120 participates in [4Fe-4S] cluster binding. Residues 131-134 carry the DEAH box motif; the sequence is EPTQ. [4Fe-4S] cluster is bound by residues Cys-194, Cys-199, and Cys-205. The DEAH box motif lies at 248 to 251; it reads DEGH. Positions 487–698 constitute a Helicase C-terminal domain; the sequence is ALDSPFNHCE…VFPIEQPEVP (212 aa).

The protein belongs to the helicase family. DinG subfamily. Type 1 sub-subfamily. It depends on [4Fe-4S] cluster as a cofactor.

It carries out the reaction Couples ATP hydrolysis with the unwinding of duplex DNA at the replication fork by translocating in the 5'-3' direction. This creates two antiparallel DNA single strands (ssDNA). The leading ssDNA polymer is the template for DNA polymerase III holoenzyme which synthesizes a continuous strand.. It catalyses the reaction ATP + H2O = ADP + phosphate + H(+). In terms of biological role, DNA-dependent ATPase and 5'-3' DNA helicase. Unwinds D-loops, R-loops, forked DNA and G-quadruplex DNA. This is ATP-dependent DNA helicase DinG from Shigella flexneri.